The sequence spans 735 residues: DNA replication licensing factor mcm5 (735 aa).

Positions 332-538 (IYETVAKSIA…RDMTLAKHVM (207 aa)) constitute an MCM domain. R372 is a binding site for ADP. The short motif at 513–516 (SRFD) is the Arginine finger element.

This sequence belongs to the MCM family. In terms of assembly, component of the mcm2-7 complex (RLF-M). The complex forms a toroidal hexameric ring with the proposed subunit order mcm2-mcm6-mcm4-mcm7-mcm3-mcm5. The heterodimer of mmcm3/mcm5 interacts with mcm4, mmcm6, mcm7 and weakly with mcm2. Component of the CMG helicase complex, composed of the mcm2-7 complex, the GINS complex and cdc45.

The protein resides in the nucleus. Its subcellular location is the chromosome. It catalyses the reaction ATP + H2O = ADP + phosphate + H(+). Acts as a component of the MCM2-7 complex (MCM complex) which is the replicative helicase essential for 'once per cell cycle' DNA replication initiation and elongation in eukaryotic cells. Core component of CDC45-MCM-GINS (CMG) helicase, the molecular machine that unwinds template DNA during replication, and around which the replisome is built. The active ATPase sites in the MCM2-7 ring are formed through the interaction surfaces of two neighboring subunits such that a critical structure of a conserved arginine finger motif is provided in trans relative to the ATP-binding site of the Walker A box of the adjacent subunit. The six ATPase active sites, however, are likely to contribute differentially to the complex helicase activity. The chain is DNA replication licensing factor mcm5 from Xenopus tropicalis (Western clawed frog).